The chain runs to 571 residues: Oxysterol-binding protein 11 (571 aa).

Residues 1-73 are disordered; sequence MSNFFKKLVK…IGEQIDTLDD (73 aa). Positions 33–42 are enriched in polar residues; it reads NGNQVVPDTA. Residues 43 to 54 are compositionally biased toward low complexity; that stretch reads SSYSDDSNSLSD. Positions 387 to 420 form a coiled coil; the sequence is YLEREENKLANKEKNKIEEREREKRKTRESRKEI.

The protein belongs to the OSBP family.

The chain is Oxysterol-binding protein 11 (osbK) from Dictyostelium discoideum (Social amoeba).